Consider the following 1293-residue polypeptide: Galactose/N-acetyl-D-galactosamine lectin heavy subunit 1 (1293 aa).

An N-terminal signal peptide occupies residues 1–15 (MKLLLLNILLLCCLA). Over 16–1234 (DKLNEFSADI…NNVGAIAAAT (1219 aa)) the chain is Extracellular. 16 N-linked (GlcNAc...) asparagine glycosylation sites follow: Asn95, Asn198, Asn234, Asn261, Asn337, Asn377, Asn390, Asn468, Asn487, Asn643, Asn659, Asn890, Asn992, Asn1138, Asn1204, and Asn1214. Residues 1235–1255 (TVAVVVVAVVVALIVVSIGLF) traverse the membrane as a helical segment. Residues 1256 to 1293 (KTYQLVSSAMKNAITITNENAEYVGADNEATNAATFNG) are Cytoplasmic-facing.

In terms of assembly, heterodimer composed of a 170 kDa heavy subunit (hgl) and a 31/35 kDa light subunit (lgl); disulfide-linked. In terms of processing, N-glycosylated.

The protein localises to the cell membrane. In terms of biological role, lectin which binds galactose and N-acetyl-D-galactosamine of host glycoproteins and thus mediates adhesion to host cells. Mediates adherence to host colonic mucins, an essential step for pathogenic tissue invasion. The protein is Galactose/N-acetyl-D-galactosamine lectin heavy subunit 1 of Entamoeba histolytica (strain ATCC 30459 / HM-1:IMSS / ABRM).